Reading from the N-terminus, the 378-residue chain is Isobutylamine N-hydroxylase (378 aa).

Exists in dimeric or trimeric form depending upon buffer conditions. It can form an isobutylamine N-hydroxylase two component enzyme system formed of a flavin reductase component (VlmR) and a monooxygenase component (VlmH).

It carries out the reaction 2-methylpropan-1-amine + FADH2 + O2 = N-(2-methylpropyl)hydroxylamine + FAD + H2O + 2 H(+). It catalyses the reaction 2-methylpropan-1-amine + FMNH2 + O2 = N-(2-methylpropyl)hydroxylamine + FMN + H2O + 2 H(+). Its activity is regulated as follows. Inhibited by 5',5'-dithio-bis(2-nitrobenzoic acid) (DTNB) and 4-(hydroxymercuri)benzoic acid (p-HMB). Functionally, involved in the biosynthesis of the azoxy antibiotic valanimycin, which has an antitumor activity. Catalyzes the oxidation of isobutylamine to isobutylhydroxylamine via the formation of a flavin 4a-hydroperoxide. Unlike other known N-hydroxylases, isobutylamine N-hydroxylase cannot carry out the reduction of the flavin cofactor and requires the NADPH-flavin oxidoreductase VlmR. Also able to oxidize propan-1-amine, butan-1-amine, butan-2-amine and benzylamine. It has a similar activity with either FMNH(2) or FADH(2). The polypeptide is Isobutylamine N-hydroxylase (Streptomyces viridifaciens).